Here is a 597-residue protein sequence, read N- to C-terminus: Translation initiation factor IF-2 (597 aa).

2 stretches are compositionally biased toward low complexity: residues Gly-57–Ala-73 and Thr-81–Asp-95. The segment at Gly-57 to Leu-96 is disordered. In terms of domain architecture, tr-type G spans His-98–Lys-271. Residues Gly-107–Thr-114 form a G1 region. Gly-107–Thr-114 is a binding site for GTP. A G2 region spans residues Gly-132–His-136. Residues Asp-153–Gly-156 are G3. Residues Asp-153–His-157 and Asn-207–Asp-210 contribute to the GTP site. The tract at residues Asn-207 to Asp-210 is G4. Residues Ser-243–Lys-245 form a G5 region.

This sequence belongs to the TRAFAC class translation factor GTPase superfamily. Classic translation factor GTPase family. IF-2 subfamily.

Its subcellular location is the cytoplasm. One of the essential components for the initiation of protein synthesis. Protects formylmethionyl-tRNA from spontaneous hydrolysis and promotes its binding to the 30S ribosomal subunits. Also involved in the hydrolysis of GTP during the formation of the 70S ribosomal complex. The chain is Translation initiation factor IF-2 from Deinococcus radiodurans (strain ATCC 13939 / DSM 20539 / JCM 16871 / CCUG 27074 / LMG 4051 / NBRC 15346 / NCIMB 9279 / VKM B-1422 / R1).